The following is a 128-amino-acid chain: Glycine cleavage system H protein (128 aa).

Residues 23 to 105 (KVRIGITDFA…YEKAWMIVVE (83 aa)) enclose the Lipoyl-binding domain. N6-lipoyllysine is present on K64.

The protein belongs to the GcvH family. In terms of assembly, the glycine cleavage system is composed of four proteins: P, T, L and H. The cofactor is (R)-lipoate.

The glycine cleavage system catalyzes the degradation of glycine. The H protein shuttles the methylamine group of glycine from the P protein to the T protein. In terms of biological role, is also involved in protein lipoylation via its role as an octanoyl/lipoyl carrier protein intermediate. The protein is Glycine cleavage system H protein of Halalkalibacterium halodurans (strain ATCC BAA-125 / DSM 18197 / FERM 7344 / JCM 9153 / C-125) (Bacillus halodurans).